Reading from the N-terminus, the 94-residue chain is ATP synthase subunit c (94 aa).

The next 2 helical transmembrane spans lie at 15–35 (VSVG…WGLI) and 61–81 (GGLM…FIFA).

The protein belongs to the ATPase C chain family. In terms of assembly, F-type ATPases have 2 components, F(1) - the catalytic core - and F(0) - the membrane proton channel. F(1) has five subunits: alpha(3), beta(3), gamma(1), delta(1), epsilon(1). F(0) has three main subunits: a(1), b(2) and c(10-14). The alpha and beta chains form an alternating ring which encloses part of the gamma chain. F(1) is attached to F(0) by a central stalk formed by the gamma and epsilon chains, while a peripheral stalk is formed by the delta and b chains.

The protein resides in the cell inner membrane. Functionally, f(1)F(0) ATP synthase produces ATP from ADP in the presence of a proton or sodium gradient. F-type ATPases consist of two structural domains, F(1) containing the extramembraneous catalytic core and F(0) containing the membrane proton channel, linked together by a central stalk and a peripheral stalk. During catalysis, ATP synthesis in the catalytic domain of F(1) is coupled via a rotary mechanism of the central stalk subunits to proton translocation. Key component of the F(0) channel; it plays a direct role in translocation across the membrane. A homomeric c-ring of between 10-14 subunits forms the central stalk rotor element with the F(1) delta and epsilon subunits. The chain is ATP synthase subunit c from Nitrosococcus oceani (strain ATCC 19707 / BCRC 17464 / JCM 30415 / NCIMB 11848 / C-107).